We begin with the raw amino-acid sequence, 440 residues long: Chorismate synthase 1, chloroplastic (440 aa).

The transit peptide at 1 to 54 (MASFVPTKQFVGASSSSDIGSSRLVSLQLPSKFSSSNFHLPSRPSQLKRLEIQA) directs the protein to the chloroplast. Residues 100–147 (RRRPGQSRITTPRKETDTCKISSGTADGLTTGSPIKVEVPNTDQRGND) form a disordered region. The segment covering 118–132 (CKISSGTADGLTTGS) has biased composition (polar residues).

Belongs to the chorismate synthase family. Homotetramer. The cofactor is FMNH2. Predominantly expressed in flowers and roots and, to a lesser extent, in stems, leaves, and cotyledons.

The protein resides in the plastid. It localises to the chloroplast. It carries out the reaction 5-O-(1-carboxyvinyl)-3-phosphoshikimate = chorismate + phosphate. It functions in the pathway metabolic intermediate biosynthesis; chorismate biosynthesis; chorismate from D-erythrose 4-phosphate and phosphoenolpyruvate: step 7/7. Its function is as follows. Catalyzes the last common step of the biosynthesis of aromatic amino acids, produced via the shikimic acid pathway. The protein is Chorismate synthase 1, chloroplastic (CS1) of Solanum lycopersicum (Tomato).